Here is a 555-residue protein sequence, read N- to C-terminus: MDIKRTILWVIFSMSLVLLYDNWQRANGHASMFFPSANTQQAAPAGAGGATPQADVPKANATNAAPGTVPAAPQAAAQPVGEKVTVTTDEVRAEIDTAGGILSRLELLNEHEKDGAPVVLLERDVNRTYLARSGLIGGDLPNHTTVFTVAPGARTLAPGQDKLDVVLTAEKNGVKFVKTYTFHKGSYVVDTRFDVTNTGTAAVSPTLYLELARDGSKVEKSQFYSTFTGPAIYTNADKYHKLTFEDIAKGKATVPAATDNGWVAMVQHYFASAWIPQTGKQHSFYAEQIDPNLYRVGIQQPLGQLAPGATVSTDARLFAGPQEERMLEQITPGLELVKDYGWLTILAKPLFWLLEKLHGFLGNWGWSIIGLTVLIKLVFFPLSAASYKSMGKMKDLQPRMTAIRERHKGDPQKMNQEMMALYRTEKVNPLGGCLPIVIQIPVFIALYWVLLSSVEMRGAPWLGWIHDLSVPDPFYILPIVMAVSMFVQTRLNPTPPDPVQAKVMMIMPLVFSFMFFFFPAGLVLYWVVNNILSIAQQWQINRMLGKGKTAAVAKS.

Residues 7-24 (ILWVIFSMSLVLLYDNWQ) traverse the membrane as a helical segment. 2 stretches are compositionally biased toward low complexity: residues 40–54 (QQAA…TPQA) and 64–81 (AAPG…QPVG). The segment at 40–81 (QQAAPAGAGGATPQADVPKANATNAAPGTVPAAPQAAAQPVG) is disordered. Transmembrane regions (helical) follow at residues 334-354 (LELV…FWLL), 360-380 (FLGN…LVFF), 430-450 (LGGC…YWVL), 468-488 (LSVP…MFVQ), and 503-523 (VMMI…AGLV).

This sequence belongs to the OXA1/ALB3/YidC family. Type 1 subfamily. In terms of assembly, interacts with the Sec translocase complex via SecD. Specifically interacts with transmembrane segments of nascent integral membrane proteins during membrane integration.

It is found in the cell inner membrane. Functionally, required for the insertion and/or proper folding and/or complex formation of integral membrane proteins into the membrane. Involved in integration of membrane proteins that insert both dependently and independently of the Sec translocase complex, as well as at least some lipoproteins. Aids folding of multispanning membrane proteins. The protein is Membrane protein insertase YidC of Cupriavidus metallidurans (strain ATCC 43123 / DSM 2839 / NBRC 102507 / CH34) (Ralstonia metallidurans).